The chain runs to 86 residues: uncharacterized protein (86 aa).

Residues 4–24 form a helical membrane-spanning segment; sequence LFFTLIAFVAIILLMSIGFII.

It is found in the membrane. This is an uncharacterized protein from Haemophilus influenzae (strain ATCC 51907 / DSM 11121 / KW20 / Rd).